Consider the following 210-residue polypeptide: V-type ATP synthase subunit D (210 aa).

This sequence belongs to the V-ATPase D subunit family.

Its function is as follows. Produces ATP from ADP in the presence of a proton gradient across the membrane. This chain is V-type ATP synthase subunit D, found in Coprothermobacter proteolyticus (strain ATCC 35245 / DSM 5265 / OCM 4 / BT).